A 361-amino-acid polypeptide reads, in one-letter code: S-adenosylmethionine-dependent nucleotide dehydratase RSAD2 (361 aa).

The 221-residue stretch at 69 to 289 (PTTPTSVNYH…LERHKEVSCL (221 aa)) folds into the Radical SAM core domain. C83, C87, and C90 together coordinate [4Fe-4S] cluster. K197 carries the N6-acetyllysine modification. K206 participates in a covalent cross-link: Glycyl lysine isopeptide (Lys-Gly) (interchain with G-Cter in ubiquitin).

The protein belongs to the radical SAM superfamily. RSAD2 family. Homodimer. Interacts with IRAK1 and TRAF6. Interacts with FPPS. Interacts with HADHB. Interacts (via C-terminus) with VAPA/VAP33 (via C-terminus). As to quaternary structure, (Microbial infection) Interacts with human cytomegalovirus/HHV-5 protein vMIA/UL37; this interaction results in RSAD2/viperin relocalization from the endoplasmic reticulum to the mitochondria. In terms of assembly, (Microbial infection) Interacts (via N-terminus) with enterovirus A71 protein 2C; this interaction inhibits viral replication. (Microbial infection) Interacts with herpes simplex virus 1/HHV-1 glycoprotein D; this interaction inhibits HHV-1 replication by facilitating IRF7-mediated IFN-beta production. Requires [4Fe-4S] cluster as cofactor. In terms of processing, acetylated by HAT1. HAT1-mediated acetylation of Lys-197 in turn recruits UBE4A that stimulates RSAD2 polyubiquitination leading to proteasomal degradation. 'Lys-6'-linked polyubiquitination at Lys-206 leads to RSAD2 protein degradation.

The protein resides in the endoplasmic reticulum membrane. It localises to the golgi apparatus. The protein localises to the endoplasmic reticulum. Its subcellular location is the lipid droplet. It is found in the mitochondrion. The protein resides in the mitochondrion inner membrane. It localises to the mitochondrion outer membrane. The catalysed reaction is CTP + AH2 + S-adenosyl-L-methionine = 3'-deoxy-3',4'-didehydro-CTP + 5'-deoxyadenosine + L-methionine + A + H2O + H(+). With respect to regulation, IRAK1 and TRAF6 synergistically activate RSAD2 increasing its activity with CTP as substrate about 10-fold. Its function is as follows. Interferon-inducible antiviral protein which plays a major role in the cell antiviral state induced by type I and type II interferon. Catalyzes the conversion of cytidine triphosphate (CTP) to 3'-deoxy-3',4'-didehydro-CTP (ddhCTP) via a SAM-dependent radical mechanism. In turn, ddhCTP acts as a chain terminator for the RNA-dependent RNA polymerases from multiple viruses and directly inhibits viral replication. Therefore, inhibits a wide range of DNA and RNA viruses, including human cytomegalovirus (HCMV), hepatitis C virus (HCV), west Nile virus (WNV), dengue virus, sindbis virus, influenza A virus, sendai virus, vesicular stomatitis virus (VSV), zika virus, and human immunodeficiency virus (HIV-1). Also promotes TLR7 and TLR9-dependent production of IFN-beta production in plasmacytoid dendritic cells (pDCs) by facilitating 'Lys-63'-linked ubiquitination of IRAK1 by TRAF6. Plays a role in CD4+ T-cells activation and differentiation. Facilitates T-cell receptor (TCR)-mediated GATA3 activation and optimal T-helper 2 (Th2) cytokine production by modulating NFKB1 and JUNB activities. Can inhibit secretion of soluble proteins. In Homo sapiens (Human), this protein is S-adenosylmethionine-dependent nucleotide dehydratase RSAD2.